The sequence spans 465 residues: Chromosomal replication initiator protein DnaA (465 aa).

Positions 1-80 (MLWTDCLTRL…VEILVDSRPG (80 aa)) are domain I, interacts with DnaA modulators. Positions 80-127 (GAILSPAEQPATTTAALSSTPVVPQRVKKEVVEPAATQSNKILNSKKR) are domain II. The interval 128–345 (LLNPLFTFSL…GALNKVVAIA (218 aa)) is domain III, AAA+ region. ATP is bound by residues Gly-173, Gly-175, Lys-176, and Thr-177. A domain IV, binds dsDNA region spans residues 346 to 465 (RFKGSQIDLD…YKNLLRLLQS (120 aa)).

This sequence belongs to the DnaA family. Oligomerizes as a right-handed, spiral filament on DNA at oriC.

Its subcellular location is the cytoplasm. Functionally, plays an essential role in the initiation and regulation of chromosomal replication. ATP-DnaA binds to the origin of replication (oriC) to initiate formation of the DNA replication initiation complex once per cell cycle. Binds the DnaA box (a 9 base pair repeat at the origin) and separates the double-stranded (ds)DNA. Forms a right-handed helical filament on oriC DNA; dsDNA binds to the exterior of the filament while single-stranded (ss)DNA is stabiized in the filament's interior. The ATP-DnaA-oriC complex binds and stabilizes one strand of the AT-rich DNA unwinding element (DUE), permitting loading of DNA polymerase. After initiation quickly degrades to an ADP-DnaA complex that is not apt for DNA replication. Binds acidic phospholipids. The chain is Chromosomal replication initiator protein DnaA from Acinetobacter baylyi (strain ATCC 33305 / BD413 / ADP1).